Here is a 234-residue protein sequence, read N- to C-terminus: Leucyl/phenylalanyl-tRNA--protein transferase (234 aa).

The protein belongs to the L/F-transferase family.

Its subcellular location is the cytoplasm. It catalyses the reaction N-terminal L-lysyl-[protein] + L-leucyl-tRNA(Leu) = N-terminal L-leucyl-L-lysyl-[protein] + tRNA(Leu) + H(+). The catalysed reaction is N-terminal L-arginyl-[protein] + L-leucyl-tRNA(Leu) = N-terminal L-leucyl-L-arginyl-[protein] + tRNA(Leu) + H(+). It carries out the reaction L-phenylalanyl-tRNA(Phe) + an N-terminal L-alpha-aminoacyl-[protein] = an N-terminal L-phenylalanyl-L-alpha-aminoacyl-[protein] + tRNA(Phe). In terms of biological role, functions in the N-end rule pathway of protein degradation where it conjugates Leu, Phe and, less efficiently, Met from aminoacyl-tRNAs to the N-termini of proteins containing an N-terminal arginine or lysine. This is Leucyl/phenylalanyl-tRNA--protein transferase from Pectobacterium atrosepticum (strain SCRI 1043 / ATCC BAA-672) (Erwinia carotovora subsp. atroseptica).